We begin with the raw amino-acid sequence, 152 residues long: MGLEKSFILFSLLVLVLGCVQPSLVGESKESPSEKFKRRHMDEEGPYQSSPTYCNQMMKDRGMTSGRCKPLNTFVHESWAKVKAICSQDKVTCKNGKSNCHKSISTLNITDCLLMGSSKYPKCDYSTTARQKHSIIACDGNPYVPVHYDATV.

The signal sequence occupies residues M1 to V25. The segment at G26–Q48 is disordered. Positions E27–E43 are enriched in basic and acidic residues. The substrate site is built by K35 and R38. Catalysis depends on H40, which acts as the Proton acceptor. 4 disulfides stabilise this stretch: C54–C112, C68–C123, C86–C138, and C93–C100. Residues K69 to T73 and K94 contribute to the substrate site. H147 acts as the Proton donor in catalysis.

It belongs to the pancreatic ribonuclease family. As to quaternary structure, monomer.

The protein resides in the secreted. It catalyses the reaction an [RNA] containing cytidine + H2O = an [RNA]-3'-cytidine-3'-phosphate + a 5'-hydroxy-ribonucleotide-3'-[RNA].. The enzyme catalyses an [RNA] containing uridine + H2O = an [RNA]-3'-uridine-3'-phosphate + a 5'-hydroxy-ribonucleotide-3'-[RNA].. In terms of biological role, endonuclease that catalyzes the cleavage of RNA on the 3' side of pyrimidine nucleotides. Acts on single-stranded and double-stranded RNA. The chain is Ribonuclease pancreatic gamma-type from Rattus fuscipes (Bush rat).